The sequence spans 230 residues: tRNA (guanine-N(7)-)-methyltransferase (230 aa).

S-adenosyl-L-methionine-binding residues include E61, E86, N113, and D136. The active site involves D136. Substrate contacts are provided by residues K140, D172, and T208–E211.

This sequence belongs to the class I-like SAM-binding methyltransferase superfamily. TrmB family.

The catalysed reaction is guanosine(46) in tRNA + S-adenosyl-L-methionine = N(7)-methylguanosine(46) in tRNA + S-adenosyl-L-homocysteine. Its pathway is tRNA modification; N(7)-methylguanine-tRNA biosynthesis. In terms of biological role, catalyzes the formation of N(7)-methylguanine at position 46 (m7G46) in tRNA. The sequence is that of tRNA (guanine-N(7)-)-methyltransferase from Mycobacterium leprae (strain Br4923).